We begin with the raw amino-acid sequence, 630 residues long: Biosynthetic arginine decarboxylase (630 aa).

Lys-99 is modified (N6-(pyridoxal phosphate)lysine). Substrate is bound at residue 281–291 (VDIGGGLGVDY).

This sequence belongs to the Orn/Lys/Arg decarboxylase class-II family. SpeA subfamily. Mg(2+) serves as cofactor. Pyridoxal 5'-phosphate is required as a cofactor.

It carries out the reaction L-arginine + H(+) = agmatine + CO2. Functionally, catalyzes the biosynthesis of agmatine from arginine. The protein is Biosynthetic arginine decarboxylase of Bacteroides thetaiotaomicron (strain ATCC 29148 / DSM 2079 / JCM 5827 / CCUG 10774 / NCTC 10582 / VPI-5482 / E50).